Reading from the N-terminus, the 122-residue chain is Large ribosomal subunit protein uL14 (122 aa).

This sequence belongs to the universal ribosomal protein uL14 family. Part of the 50S ribosomal subunit. Forms a cluster with proteins L3 and L19. In the 70S ribosome, L14 and L19 interact and together make contacts with the 16S rRNA in bridges B5 and B8.

Its function is as follows. Binds to 23S rRNA. Forms part of two intersubunit bridges in the 70S ribosome. The chain is Large ribosomal subunit protein uL14 from Caulobacter sp. (strain K31).